We begin with the raw amino-acid sequence, 417 residues long: uncharacterized protein (417 aa).

The tract at residues 1–24 (MSQPPINPLGQPQVPAAASPSGQP) is disordered. The next 4 membrane-spanning stretches (helical) occupy residues 54–74 (VYDT…LLTA), 79–99 (LMLY…TLLI), 117–137 (AIVV…GAFV), and 143–163 (MLVF…LYFM). A compositionally biased stretch (basic and acidic residues) spans 211–228 (DLSASARMEEHEASQRQD). Disordered regions lie at residues 211–283 (DLSA…FKDD) and 308–417 (IMPA…RKNK). The segment covering 312–322 (SSRSPNFSTGT) has biased composition (polar residues). Positions 336–347 (EPSIPRVSSSSR) are enriched in low complexity. Residues 391 to 401 (STANLSPSNPF) are compositionally biased toward polar residues.

It belongs to the chlamydial CPn_0443/CT_005/TC_0273 family.

Its subcellular location is the cell membrane. This is an uncharacterized protein from Chlamydia pneumoniae (Chlamydophila pneumoniae).